We begin with the raw amino-acid sequence, 466 residues long: 3-isopropylmalate dehydratase large subunit (466 aa).

[4Fe-4S] cluster contacts are provided by Cys-347, Cys-407, and Cys-410.

Belongs to the aconitase/IPM isomerase family. LeuC type 1 subfamily. Heterodimer of LeuC and LeuD. It depends on [4Fe-4S] cluster as a cofactor.

The catalysed reaction is (2R,3S)-3-isopropylmalate = (2S)-2-isopropylmalate. Its pathway is amino-acid biosynthesis; L-leucine biosynthesis; L-leucine from 3-methyl-2-oxobutanoate: step 2/4. Its function is as follows. Catalyzes the isomerization between 2-isopropylmalate and 3-isopropylmalate, via the formation of 2-isopropylmaleate. The chain is 3-isopropylmalate dehydratase large subunit from Vibrio vulnificus (strain CMCP6).